The chain runs to 669 residues: UvrABC system protein C (669 aa).

The GIY-YIG domain occupies 16–95 (TNPGVYRFRD…IKEFKPRFNV (80 aa)). Positions 207–242 (KRFIGRLEKDMAAAVAELDYERAARVRDDIIALRKV) constitute a UVR domain.

The protein belongs to the UvrC family. In terms of assembly, interacts with UvrB in an incision complex.

Its subcellular location is the cytoplasm. Functionally, the UvrABC repair system catalyzes the recognition and processing of DNA lesions. UvrC both incises the 5' and 3' sides of the lesion. The N-terminal half is responsible for the 3' incision and the C-terminal half is responsible for the 5' incision. The sequence is that of UvrABC system protein C from Arthrobacter sp. (strain FB24).